The primary structure comprises 273 residues: UPF0380 protein YubP (273 aa).

Belongs to the UPF0380 family.

In Escherichia coli (strain K12), this protein is UPF0380 protein YubP (yubP).